Reading from the N-terminus, the 259-residue chain is TCF3 fusion partner homolog (259 aa).

Disordered stretches follow at residues 50–72 and 141–210; these read GGLG…GRRR and EDDG…APVQ. Ser167 is modified (phosphoserine). Positions 167–178 are enriched in polar residues; that stretch reads SPSQRTTATLDP. The residue at position 172 (Thr172) is a Phosphothreonine. Phosphoserine occurs at positions 180 and 188. Residue Thr203 is modified to Phosphothreonine. Lys222 participates in a covalent cross-link: Glycyl lysine isopeptide (Lys-Gly) (interchain with G-Cter in SUMO2). Position 255 is a phosphoserine (Ser255).

As to quaternary structure, interacts with NOL3; translocates NOL3 into the nucleus and negatively regulated TFPT-induced cell death. Component of the chromatin remodeling INO80 complex; specifically part of a complex module associated with the N-terminus of INO80.

The protein localises to the nucleus. Appears to promote apoptosis in a p53/TP53-independent manner. Its function is as follows. Putative regulatory component of the chromatin remodeling INO80 complex which is involved in transcriptional regulation, DNA replication and probably DNA repair. This is TCF3 fusion partner homolog (Tfpt) from Mus musculus (Mouse).